We begin with the raw amino-acid sequence, 43 residues long: Thymosin beta-b (43 aa).

Composition is skewed to basic and acidic residues over residues 1–25 and 33–43; these read MADKPDISEVSQFDKTKLKKTETQE and ETIEQEKQCEA. The interval 1–43 is disordered; it reads MADKPDISEVSQFDKTKLKKTETQEKNTLPTKETIEQEKQCEA.

It belongs to the thymosin beta family.

The protein resides in the cytoplasm. The protein localises to the cytoskeleton. Its function is as follows. Plays an important role in the organization of the cytoskeleton. Binds to and sequesters actin monomers (G actin) and therefore inhibits actin polymerization. The chain is Thymosin beta-b from Cyprinus carpio (Common carp).